The primary structure comprises 120 residues: Large ribosomal subunit protein uL18 (120 aa).

It belongs to the universal ribosomal protein uL18 family. In terms of assembly, part of the 50S ribosomal subunit; part of the 5S rRNA/L5/L18/L25 subcomplex. Contacts the 5S and 23S rRNAs.

In terms of biological role, this is one of the proteins that bind and probably mediate the attachment of the 5S RNA into the large ribosomal subunit, where it forms part of the central protuberance. The polypeptide is Large ribosomal subunit protein uL18 (Bacillus cereus (strain AH820)).